The chain runs to 320 residues: Olfactory receptor 51E2 (320 aa).

Residues 1-24 are Extracellular-facing; sequence MSSCNFTHATFMLIGIPGLEEAHF. N-linked (GlcNAc...) asparagine glycosylation occurs at asparagine 5. A helical membrane pass occupies residues 25–45; sequence WFGFPLLSMYAVALFGNCIVV. At 46–53 the chain is on the cytoplasmic side; the sequence is FIVRTERS. The helical transmembrane segment at 54-74 threads the bilayer; it reads LHAPMYLFLCMLAAIDLALST. Residues 75-98 lie on the Extracellular side of the membrane; the sequence is STMPKILALFWFDSREITFDACLA. Cysteines 96 and 178 form a disulfide. The chain crosses the membrane as a helical span at residues 99-119; that stretch reads QMFFIHALSAIESTILLAMAF. At 120-138 the chain is on the cytoplasmic side; that stretch reads DRYVAICHPLRHAAVLNNT. The chain crosses the membrane as a helical span at residues 139–159; the sequence is VTVQIGMVALVRGSLFFFPLP. The Extracellular portion of the chain corresponds to 160–195; sequence LLIKRLAFCHSNVLSHSYCVHQDVMKLAYTDTLPNV. A helical membrane pass occupies residues 196–216; that stretch reads VYGLTAILLVMGVDVMFISLS. The Cytoplasmic segment spans residues 217 to 236; it reads YFLIIRAVLQLPSKSERAKA. The helical transmembrane segment at 237 to 257 threads the bilayer; it reads FGTCVSHIGVVLAFYVPLIGL. The Extracellular portion of the chain corresponds to 258 to 272; that stretch reads SVVHRFGNSLDPIVH. Residues 273-293 traverse the membrane as a helical segment; it reads VLMGDVYLLLPPVINPIIYGA. Topologically, residues 294 to 320 are cytoplasmic; sequence KTKQIRTRVLAMFKISCDKDIEAGGNT.

It belongs to the G-protein coupled receptor 1 family. In terms of tissue distribution, expressed in brain and liver. Expressed only in some areas of the brain and in the olfactory epithelium.

The protein resides in the cell membrane. The protein localises to the early endosome membrane. Functionally, olfactory receptor. The activity of this receptor is probably mediated by G-proteins which induce elevation of intracellular Ca(2+), cAMP and activation of phosphorylation of the protein kinases PKA and MAPK3/MAPK1. Activation of OR51E2 may affect melanocyte proliferation, differentiation, and melanogenesis and may increase proliferation and migration of primary retinal pigment epithelial (RPE) cells. Activated by the short chain fatty acids (SCFA), acetate and propionate. In response to SCFA, may positively regulate renin secretion and increase blood pressure. May also be activated by steroid hormones and regulate cell proliferation. Activated by L-lactate in glomus cells. In Rattus norvegicus (Rat), this protein is Olfactory receptor 51E2 (Or51e2).